The primary structure comprises 375 residues: UDP-N-acetylglucosamine--N-acetylmuramyl-(pentapeptide) pyrophosphoryl-undecaprenol N-acetylglucosamine transferase (375 aa).

Residues T13–G15, N124, R165, S193, and Q294 each bind UDP-N-acetyl-alpha-D-glucosamine.

It belongs to the glycosyltransferase 28 family. MurG subfamily.

Its subcellular location is the cell inner membrane. It catalyses the reaction di-trans,octa-cis-undecaprenyl diphospho-N-acetyl-alpha-D-muramoyl-L-alanyl-D-glutamyl-meso-2,6-diaminopimeloyl-D-alanyl-D-alanine + UDP-N-acetyl-alpha-D-glucosamine = di-trans,octa-cis-undecaprenyl diphospho-[N-acetyl-alpha-D-glucosaminyl-(1-&gt;4)]-N-acetyl-alpha-D-muramoyl-L-alanyl-D-glutamyl-meso-2,6-diaminopimeloyl-D-alanyl-D-alanine + UDP + H(+). Its pathway is cell wall biogenesis; peptidoglycan biosynthesis. Cell wall formation. Catalyzes the transfer of a GlcNAc subunit on undecaprenyl-pyrophosphoryl-MurNAc-pentapeptide (lipid intermediate I) to form undecaprenyl-pyrophosphoryl-MurNAc-(pentapeptide)GlcNAc (lipid intermediate II). The sequence is that of UDP-N-acetylglucosamine--N-acetylmuramyl-(pentapeptide) pyrophosphoryl-undecaprenol N-acetylglucosamine transferase from Mesorhizobium japonicum (strain LMG 29417 / CECT 9101 / MAFF 303099) (Mesorhizobium loti (strain MAFF 303099)).